Reading from the N-terminus, the 183-residue chain is Protein Dr1 (183 aa).

Residues 19–82 form the Histone-fold domain; the sequence is TLPRASINKI…INAEHVLEAL (64 aa). Residues 92-183 form a repression of TATA-containing promoters region; sequence QEAEAVLHDC…DDDDDDDDDY (92 aa). The segment at 155 to 183 is disordered; it reads AMVQRPPLADGSVASKPSEDDDDDDDDDY. The span at 173 to 183 shows a compositional bias: acidic residues; sequence EDDDDDDDDDY.

This sequence belongs to the NC2 beta/DR1 family. In terms of assembly, component of the Ada2a-containing (ATAC) complex composed of at least Ada2a, Atac1, Hcf, Ada3, Gcn5, Mocs2B, Charac-14, Atac3, Atac2, NC2beta and wds. Homodimer. Interacts with NC2-alpha/Drap1 to form the dNC2 complex.

The protein resides in the nucleus. In terms of biological role, bifunctional basic transcription factor. Activates transcription of DPE (Downstream Promoter Element) containing promoters while repressing transcription of promoters which contain TATA elements. Together with Chrac-14, promotes nucleosome sliding of ATP-dependent nucleosome remodeling complexes. The polypeptide is Protein Dr1 (NC2beta) (Drosophila melanogaster (Fruit fly)).